Reading from the N-terminus, the 676-residue chain is Pescadillo homolog (676 aa).

Positions 298–327 (IAAMADDEDEQEVEMAEADAEDDDEEENTE) form a coiled coil. Disordered regions lie at residues 298-338 (IAAM…TAPD), 413-439 (PLAN…STKP), 478-502 (VKPK…EAEA), and 515-676 (EVDD…AERA). The span at 302-327 (ADDEDEQEVEMAEADAEDDDEEENTE) shows a compositional bias: acidic residues. The BRCT domain occupies 351–466 (EIASLFAPFT…KLLRPDLYAP (116 aa)). The segment covering 415-427 (ANGASAAGAEDAA) has biased composition (low complexity). Acidic residues-rich tracts occupy residues 515 to 524 (EVDDDEDMDA), 539 to 557 (DVAD…DAEG), and 565 to 577 (FDDE…DISE). A coiled-coil region spans residues 568–676 (ESEAESDISE…EKAKAAAERA (109 aa)). Basic and acidic residues-rich tracts occupy residues 579–608 (EAAR…KKEQ), 620–631 (KRAEEEERDRQK), 643–659 (KRIE…SENL), and 666–676 (LEKAKAAAERA).

Belongs to the pescadillo family. Component of the NOP7 complex, composed of ERB1, NOP7 and YTM1. The complex is held together by ERB1, which interacts with NOP7 via its N-terminal domain and with YTM1 via a high-affinity interaction between the seven-bladed beta-propeller domains of the 2 proteins. The NOP7 complex associates with the 66S pre-ribosome.

It is found in the nucleus. The protein resides in the nucleolus. The protein localises to the nucleoplasm. Its function is as follows. Component of the NOP7 complex, which is required for maturation of the 25S and 5.8S ribosomal RNAs and formation of the 60S ribosome. The protein is Pescadillo homolog of Phaeosphaeria nodorum (strain SN15 / ATCC MYA-4574 / FGSC 10173) (Glume blotch fungus).